The sequence spans 515 residues: DNA-directed RNA polymerase subunit Rpo2N (515 aa).

This sequence belongs to the RNA polymerase beta chain family. Part of the RNA polymerase complex.

It localises to the cytoplasm. The enzyme catalyses RNA(n) + a ribonucleoside 5'-triphosphate = RNA(n+1) + diphosphate. In terms of biological role, DNA-dependent RNA polymerase (RNAP) catalyzes the transcription of DNA into RNA using the four ribonucleoside triphosphates as substrates. The Rpo2 subunit (Rpo2N and Rpo2C in this organism) is implicated in DNA promoter recognition and in nucleotide binding. The chain is DNA-directed RNA polymerase subunit Rpo2N from Methanothermobacter thermautotrophicus (strain Winter) (Methanobacterium thermoautotrophicum).